The following is a 661-amino-acid chain: UvrABC system protein C (661 aa).

A GIY-YIG domain is found at H52 to V130. Residues Q240–I275 enclose the UVR domain.

It belongs to the UvrC family. Interacts with UvrB in an incision complex.

The protein localises to the cytoplasm. The UvrABC repair system catalyzes the recognition and processing of DNA lesions. UvrC both incises the 5' and 3' sides of the lesion. The N-terminal half is responsible for the 3' incision and the C-terminal half is responsible for the 5' incision. In Bartonella henselae (strain ATCC 49882 / DSM 28221 / CCUG 30454 / Houston 1) (Rochalimaea henselae), this protein is UvrABC system protein C.